The sequence spans 392 residues: Succinate--CoA ligase [ADP-forming] subunit beta (392 aa).

Residues 9–236 enclose the ATP-grasp domain; it reads RDLFERHGLP…QAAVDPLEQA (228 aa). ATP contacts are provided by residues lysine 45, 52–54, alanine 94, and glutamate 99; that span reads GRG. Residues asparagine 191 and aspartate 205 each contribute to the Mg(2+) site. Residues asparagine 256 and 318–320 each bind substrate; that span reads GIT.

It belongs to the succinate/malate CoA ligase beta subunit family. In terms of assembly, heterotetramer of two alpha and two beta subunits. It depends on Mg(2+) as a cofactor.

It catalyses the reaction succinate + ATP + CoA = succinyl-CoA + ADP + phosphate. The enzyme catalyses GTP + succinate + CoA = succinyl-CoA + GDP + phosphate. It participates in carbohydrate metabolism; tricarboxylic acid cycle; succinate from succinyl-CoA (ligase route): step 1/1. Succinyl-CoA synthetase functions in the citric acid cycle (TCA), coupling the hydrolysis of succinyl-CoA to the synthesis of either ATP or GTP and thus represents the only step of substrate-level phosphorylation in the TCA. The beta subunit provides nucleotide specificity of the enzyme and binds the substrate succinate, while the binding sites for coenzyme A and phosphate are found in the alpha subunit. The chain is Succinate--CoA ligase [ADP-forming] subunit beta from Salinispora arenicola (strain CNS-205).